Here is a 760-residue protein sequence, read N- to C-terminus: Serine/threonine-protein kinase dkf-1 (760 aa).

2 consecutive Phorbol-ester/DAG-type zinc fingers follow at residues 103 to 153 (PHVV…GIIV) and 194 to 244 (PHTL…PSNC). The region spanning 316-444 (KNLEGWMIHF…QFIKESLQPP (129 aa)) is the PH domain. The region spanning 464–725 (VLSDKTLGSG…IEKCLEHGWL (262 aa)) is the Protein kinase domain. Residues 470 to 478 (LGSGQFGTV) and Lys-493 contribute to the ATP site. The active-site Proton acceptor is Asp-589. A Phosphothreonine modification is found at Thr-626.

The protein belongs to the protein kinase superfamily. CAMK Ser/Thr protein kinase family. PKD subfamily. The cofactor is Mg(2+). In terms of processing, prolonged phosphorylation at Thr-626 results in ubiquitination and degradation.

It is found in the cytoplasm. The protein localises to the membrane. It catalyses the reaction L-seryl-[protein] + ATP = O-phospho-L-seryl-[protein] + ADP + H(+). The enzyme catalyses L-threonyl-[protein] + ATP = O-phospho-L-threonyl-[protein] + ADP + H(+). With respect to regulation, activated by DAG and phorbol esters. Phorbol-ester/DAG-type domain 1 binds phorbol ester with high affinity and mediates accumulation at the cell periphery. Phorbol-ester/DAG-type domain 2 binds phorbol ester with low affinity but may mediate initial contact, resulting in a conformational change allowing previously occluded domain 1 to anchor the kinase. Phosphorylation on Thr-626 is then also required for activation and may also result in a further conformational change. Converts transient diacylglycerol (DAG) signals into prolonged physiological effects, independently of PKC. Role in the regulation of growth and neuromuscular control of movement. Involved in immune response to S.aureus bacterium by activating transcription factor hlh-30 downstream of phospholipase plc-1. In Caenorhabditis briggsae, this protein is Serine/threonine-protein kinase dkf-1.